Reading from the N-terminus, the 834-residue chain is Membrane-associated lipoprotein (834 aa).

The N-terminal stretch at 1-25 is a signal peptide; sequence MKKNKLTTLALILPITILTPIVIAS. The N-palmitoyl cysteine moiety is linked to residue C26. The S-diacylglycerol cysteine moiety is linked to residue C26. Residues 143–237 enclose the Lipoprotein-associated type-17 domain; sequence RLKDTFDFKL…LLEVSGFKSN (95 aa).

The protein resides in the cell membrane. In Ureaplasma parvum serovar 3 (strain ATCC 700970), this protein is Membrane-associated lipoprotein.